The chain runs to 305 residues: Mycothiol acetyltransferase (305 aa).

2 N-acetyltransferase domains span residues 10–154 (DRLD…VVLE) and 156–305 (ISLR…YARA). 1D-myo-inositol 2-(L-cysteinylamino)-2-deoxy-alpha-D-glucopyranoside is bound at residue Glu38. 82-84 (LAV) is an acetyl-CoA binding site. 1D-myo-inositol 2-(L-cysteinylamino)-2-deoxy-alpha-D-glucopyranoside-binding residues include Glu183, Lys225, and Glu238. Acetyl-CoA-binding positions include 242 to 244 (VAI) and 249 to 255 (QGRGLGR). A 1D-myo-inositol 2-(L-cysteinylamino)-2-deoxy-alpha-D-glucopyranoside-binding site is contributed by Tyr276. 281–286 (NASALH) provides a ligand contact to acetyl-CoA.

This sequence belongs to the acetyltransferase family. MshD subfamily. As to quaternary structure, monomer.

It carries out the reaction 1D-myo-inositol 2-(L-cysteinylamino)-2-deoxy-alpha-D-glucopyranoside + acetyl-CoA = mycothiol + CoA + H(+). Catalyzes the transfer of acetyl from acetyl-CoA to desacetylmycothiol (Cys-GlcN-Ins) to form mycothiol. In Rhodococcus opacus (strain B4), this protein is Mycothiol acetyltransferase.